The sequence spans 279 residues: Urease accessory protein UreD (279 aa).

It belongs to the UreD family. As to quaternary structure, ureD, UreF and UreG form a complex that acts as a GTP-hydrolysis-dependent molecular chaperone, activating the urease apoprotein by helping to assemble the nickel containing metallocenter of UreC. The UreE protein probably delivers the nickel.

Its subcellular location is the cytoplasm. In terms of biological role, required for maturation of urease via the functional incorporation of the urease nickel metallocenter. This Pseudomonas fluorescens (strain ATCC BAA-477 / NRRL B-23932 / Pf-5) protein is Urease accessory protein UreD.